The primary structure comprises 621 residues: Interleukin-1 receptor-associated kinase-like 2 (621 aa).

The 82-residue stretch at 13-94 folds into the Death domain; sequence LDDLCRNMDT…RAAQIILNWK (82 aa). Residues 113-175 are disordered; that stretch reads GKPLAASVRN…TASADSKDFS (63 aa). The segment covering 157 to 169 has biased composition (polar residues); the sequence is ASSSLKTNQTASA. The Protein kinase domain occupies 206-476; sequence FNPSHKISEG…AEALVMAACL (271 aa). Residues 212–220, Lys-233, and 333–336 each bind ATP; these read ISEGTFADV and KSSN. The segment covering 503-522 has biased composition (polar residues); that stretch reads ETSLPCSGLSEGTGSSFNTP. The disordered stretch occupies residues 503–534; the sequence is ETSLPCSGLSEGTGSSFNTPEETDDVDNSSFD.

It belongs to the protein kinase superfamily. TKL Ser/Thr protein kinase family. Pelle subfamily. In terms of assembly, interacts with MYD88. IL-1 stimulation leads to the formation of a signaling complex which dissociates from the IL-1 receptor following the binding of PELI1.

Binds to the IL-1 type I receptor following IL-1 engagement, triggering intracellular signaling cascades leading to transcriptional up-regulation and mRNA stabilization. This is Interleukin-1 receptor-associated kinase-like 2 (IRAK2) from Bos taurus (Bovine).